The sequence spans 363 residues: Probable cinnamyl alcohol dehydrogenase 6 (363 aa).

Residue C51 coordinates Zn(2+). NADP(+) is bound at residue S53. Zn(2+) is bound by residues H73, E74, C104, C107, C110, C118, and C167. Residues S171, 192 to 197 (GLGGLG), 215 to 220 (SSTTGK), T255, G279, and 302 to 304 (SGI) each bind NADP(+).

This sequence belongs to the zinc-containing alcohol dehydrogenase family. Homodimer. The cofactor is Zn(2+). Expressed in the primary and lateral roots, and root caps. Expressed in the hypocotyl, cotyledon veins and hydathodes. In stems, expressed in the vascular cambium, interfascicular cambium and developing xylem. Expressed in the style, anthers, stamen filaments, vascular tissues of sepals, stigmatic regions in flowers, and abscission and style regions of siliques.

It carries out the reaction (E)-cinnamyl alcohol + NADP(+) = (E)-cinnamaldehyde + NADPH + H(+). The enzyme catalyses (E)-coniferol + NADP(+) = (E)-coniferaldehyde + NADPH + H(+). The catalysed reaction is (E)-sinapyl alcohol + NADP(+) = (E)-sinapaldehyde + NADPH + H(+). It catalyses the reaction (E)-4-coumaroyl alcohol + NADP(+) = (E)-4-coumaraldehyde + NADPH + H(+). It carries out the reaction (E)-caffeyl alcohol + NADP(+) = (E)-caffeyl aldehyde + NADPH + H(+). It participates in aromatic compound metabolism; phenylpropanoid biosynthesis. Its function is as follows. Involved in lignin biosynthesis. Catalyzes the final step specific for the production of lignin monomers. Catalyzes the NADPH-dependent reduction of coniferaldehyde, 5-hydroxyconiferaldehyde, sinapaldehyde, 4-coumaraldehyde and caffeyl aldehyde to their respective alcohols. This Arabidopsis thaliana (Mouse-ear cress) protein is Probable cinnamyl alcohol dehydrogenase 6 (CAD6).